Reading from the N-terminus, the 299-residue chain is Peroxisomal biogenesis factor 19 (299 aa).

A disordered region spans residues 1–63; sequence MAAAEGDGGV…SPGDTAKDAL (63 aa). Ala-2 carries the post-translational modification N-acetylalanine. The segment at 2 to 56 is docking to the peroxisome membrane and binding to PEX3; that stretch reads AAAEGDGGVRAEADRELEELLESALDDFDKAKPSPAPPPTTTAPDASGPQKRSPG. The interval 2–91 is necessary for PEX19 function on peroxisome biogenesis; sequence AAAEGDGGVR…QATAEFEKAM (90 aa). Acidic residues predominate over residues 16–27; sequence RELEELLESALD. Residues Ser-35, Ser-54, and Ser-66 each carry the phosphoserine modification. Thr-236 is modified (phosphothreonine). Cys-296 bears the Cysteine methyl ester mark. Cys-296 carries the S-farnesyl cysteine lipid modification. Positions 297–299 are cleaved as a propeptide — removed in mature form; it reads LIM.

The protein belongs to the peroxin-19 family. As to quaternary structure, interacts with a broad range of peroxisomal membrane proteins, including PEX3, PEX10, PEX11A, PEX11B, PEX12, PEX13, PEX14 and PEX16, PXMP2/PMP22, PXMP4/PMP24, SLC25A17/PMP34, ABCD1/ALDP, ABCD2/ALDRP, and ABCD3/PMP70. Also interacts with the tumor suppressor CDKN2A/p19ARF.

Its subcellular location is the cytoplasm. The protein localises to the peroxisome membrane. Functionally, necessary for early peroxisomal biogenesis. Acts both as a cytosolic chaperone and as an import receptor for peroxisomal membrane proteins (PMPs). Binds and stabilizes newly synthesized PMPs in the cytoplasm by interacting with their hydrophobic membrane-spanning domains, and targets them to the peroxisome membrane by binding to the integral membrane protein PEX3. Excludes CDKN2A from the nucleus and prevents its interaction with MDM2, which results in active degradation of TP53. The sequence is that of Peroxisomal biogenesis factor 19 (PEX19) from Bos taurus (Bovine).